Here is a 122-residue protein sequence, read N- to C-terminus: Large ribosomal subunit protein uL14 (122 aa).

This sequence belongs to the universal ribosomal protein uL14 family. In terms of assembly, part of the 50S ribosomal subunit. Forms a cluster with proteins L3 and L19. In the 70S ribosome, L14 and L19 interact and together make contacts with the 16S rRNA in bridges B5 and B8.

Its function is as follows. Binds to 23S rRNA. Forms part of two intersubunit bridges in the 70S ribosome. The protein is Large ribosomal subunit protein uL14 of Corynebacterium glutamicum (strain R).